The chain runs to 407 residues: Transmembrane protein 184B (407 aa).

A disordered region spans residues 1 to 25 (MTVRGDVLAPDPASPTTAAASPSVS). A compositionally biased stretch (low complexity) spans 9 to 25 (APDPASPTTAAASPSVS). Transmembrane regions (helical) follow at residues 40–60 (FLMTTAAQAISGFFVWTALLI), 84–104 (ILFIVPIYAFDSWLSLLFFTN), 121–141 (LVIYNFLSLCYEYLGGESSIM), 178–198 (LQFCVVKPLMAVSTVVLQAFG), 214–234 (VTIIYNISVSLALYALFLFYF), 249–269 (FFMVKSVIFLSFWQGMLLAIL), and 290–310 (VAAGYQDFIICVEMFFAALAL). The segment at 369-395 (TLEPGPTWRGGAHGLSRSHSLSGARDN) is disordered. Phosphoserine occurs at positions 388, 402, and 403.

The protein belongs to the TMEM184 family.

The protein resides in the membrane. May activate the MAP kinase signaling pathway. In Homo sapiens (Human), this protein is Transmembrane protein 184B (TMEM184B).